The chain runs to 409 residues: Bone morphogenetic protein 4 (409 aa).

An N-terminal signal peptide occupies residues 1 to 19 (MIPGNRMLMVVLLCQVLLG). Positions 20–293 (GASHASLIPE…ALTRRRRAKR (274 aa)) are excised as a propeptide. At Ser-91 the chain carries Phosphoserine. The tract at residues 91–110 (SGEEEEEEQMPSGGLEYPER) is disordered. Asn-144, Asn-209, Asn-351, and Asn-366 each carry an N-linked (GlcNAc...) asparagine glycan. 3 disulfide bridges follow: Cys-309-Cys-374, Cys-338-Cys-406, and Cys-342-Cys-408.

This sequence belongs to the TGF-beta family. In terms of assembly, homodimer; disulfide-linked. Interacts with GREM2. Part of a complex consisting of TWSG1 and CHRD. Interacts with the serine proteases, HTRA1 and HTRA3; the interaction with either inhibits BMP4-mediated signaling. The HTRA protease activity is required for this inhibition. Interacts with SOSTDC1. Interacts with FBN1 (via N-terminal domain) and FBN2. Interacts with type I receptor BMPR1A. Interacts with type II receptor BMPR2. Interacts with FSTL1; this interaction inhibits the activation of the BMP4/Smad1/5/8 signaling pathway. Interacts with SCUBE3. Interacts with TGFBR3.

The protein resides in the secreted. Its subcellular location is the extracellular space. It is found in the extracellular matrix. Functionally, growth factor of the TGF-beta superfamily that plays essential roles in many developmental processes, including neurogenesis, vascular development, angiogenesis and osteogenesis. Acts in concert with PTHLH/PTHRP to stimulate ductal outgrowth during embryonic mammary development and to inhibit hair follicle induction. Initiates the canonical BMP signaling cascade by associating with type I receptor BMPR1A and type II receptor BMPR2. Once all three components are bound together in a complex at the cell surface, BMPR2 phosphorylates and activates BMPR1A. In turn, BMPR1A propagates signal by phosphorylating SMAD1/5/8 that travel to the nucleus and act as activators and repressors of transcription of target genes. Positively regulates the expression of odontogenic development regulator MSX1 via inducing the IPO7-mediated import of SMAD1 to the nucleus. Required for MSX1-mediated mesenchymal molar tooth bud development beyond the bud stage, via promoting Wnt signaling. Acts as a positive regulator of odontoblast differentiation during mesenchymal tooth germ formation, expression is repressed during the bell stage by MSX1-mediated inhibition of CTNNB1 signaling. Able to induce its own expression in dental mesenchymal cells and also in the neighboring dental epithelial cells via an MSX1-mediated pathway. Can also signal through non-canonical BMP pathways such as ERK/MAP kinase, PI3K/Akt, or SRC cascades. For example, induces SRC phosphorylation which, in turn, activates VEGFR2, leading to an angiogenic response. The polypeptide is Bone morphogenetic protein 4 (BMP4) (Oryctolagus cuniculus (Rabbit)).